Consider the following 360-residue polypeptide: Histidinol-phosphate aminotransferase (360 aa).

Lys-224 carries the post-translational modification N6-(pyridoxal phosphate)lysine.

The protein belongs to the class-II pyridoxal-phosphate-dependent aminotransferase family. Histidinol-phosphate aminotransferase subfamily. Requires pyridoxal 5'-phosphate as cofactor.

It catalyses the reaction L-histidinol phosphate + 2-oxoglutarate = 3-(imidazol-4-yl)-2-oxopropyl phosphate + L-glutamate. It functions in the pathway amino-acid biosynthesis; L-histidine biosynthesis; L-histidine from 5-phospho-alpha-D-ribose 1-diphosphate: step 7/9. This Methanococcoides burtonii (strain DSM 6242 / NBRC 107633 / OCM 468 / ACE-M) protein is Histidinol-phosphate aminotransferase.